Reading from the N-terminus, the 366-residue chain is Phospho-N-acetylmuramoyl-pentapeptide-transferase (366 aa).

10 helical membrane passes run 27–47 (GAAITSLVLCWLLGRPMISLL), 76–96 (PTMGGLLILLAVSLSCLIWVI), 101–121 (FFWLSLLSMLFMGGIGFWDDF), 136–156 (IKLLAQAIVGVVVGIVLLADP), 176–196 (IDIGWMAIPFFILVVMGSSNA), 205–225 (GLAAGCTIGVAFVYAVFSYIS), 241–261 (GAGELTIFCSALIGACMGFLW), 264–284 (CYPAAVFMGDTGSLAIGSALG), 285–305 (VVAIILGQELLLVIAGGIFVI), and 343–363 (AVTVRFWILSLLFGLLALSSL).

Belongs to the glycosyltransferase 4 family. MraY subfamily. Mg(2+) serves as cofactor.

It is found in the cell inner membrane. The catalysed reaction is UDP-N-acetyl-alpha-D-muramoyl-L-alanyl-gamma-D-glutamyl-meso-2,6-diaminopimeloyl-D-alanyl-D-alanine + di-trans,octa-cis-undecaprenyl phosphate = di-trans,octa-cis-undecaprenyl diphospho-N-acetyl-alpha-D-muramoyl-L-alanyl-D-glutamyl-meso-2,6-diaminopimeloyl-D-alanyl-D-alanine + UMP. It functions in the pathway cell wall biogenesis; peptidoglycan biosynthesis. Catalyzes the initial step of the lipid cycle reactions in the biosynthesis of the cell wall peptidoglycan: transfers peptidoglycan precursor phospho-MurNAc-pentapeptide from UDP-MurNAc-pentapeptide onto the lipid carrier undecaprenyl phosphate, yielding undecaprenyl-pyrophosphoryl-MurNAc-pentapeptide, known as lipid I. The polypeptide is Phospho-N-acetylmuramoyl-pentapeptide-transferase (Methylacidiphilum infernorum (isolate V4) (Methylokorus infernorum (strain V4))).